Reading from the N-terminus, the 296-residue chain is Cytochrome bc1 complex cytochrome c subunit (296 aa).

Positions 1–19 (MMETNPQTSEGAGKAQSSA) are enriched in polar residues. A disordered region spans residues 1–27 (MMETNPQTSEGAGKAQSSAKKVKNRRK). Residues 32–52 (VAGAMALTIGLSGAGILATAI) traverse the membrane as a helical segment. 2 consecutive Cytochrome c domains span residues 67–147 (ALIA…AANG) and 177–255 (LDVS…KSTK). Heme c is bound by residues Cys-80, Cys-83, His-84, Cys-190, Cys-193, and His-194. The helical transmembrane segment at 274-294 (GLFMWGIGIMVLIAAAMWIGS) threads the bilayer.

The cytochrome bc1 complex is composed of a cytochrome b (QcrB), the Rieske iron-sulfur protein (QcrA) and a diheme cytochrome c (QcrC) subunit. The bc1 complex forms a supercomplex with cytochrome c oxidase (cytochrome aa3). In terms of processing, binds 2 heme c groups covalently per subunit.

It is found in the cell membrane. It catalyses the reaction a quinol + 2 Fe(III)-[cytochrome c](out) = a quinone + 2 Fe(II)-[cytochrome c](out) + 2 H(+)(out). Functionally, cytochrome c1 subunit of the cytochrome bc1 complex, an essential component of the respiratory electron transport chain required for ATP synthesis. The bc1 complex catalyzes the oxidation of menaquinol and the reduction of cytochrome c in the respiratory chain. The bc1 complex operates through a Q-cycle mechanism that couples electron transfer to generation of the proton gradient that drives ATP synthesis. This is Cytochrome bc1 complex cytochrome c subunit (qcrC) from Corynebacterium efficiens (strain DSM 44549 / YS-314 / AJ 12310 / JCM 11189 / NBRC 100395).